Consider the following 1412-residue polypeptide: DNA-directed RNA polymerase subunit beta' (1412 aa).

Residues cysteine 70, cysteine 72, cysteine 85, and cysteine 88 each contribute to the Zn(2+) site. Positions 460, 462, and 464 each coordinate Mg(2+). Zn(2+)-binding residues include cysteine 819, cysteine 893, cysteine 900, and cysteine 903. A disordered region spans residues 1393–1412; that stretch reads EAFEFGTPSAPAEEPQHPAE.

The protein belongs to the RNA polymerase beta' chain family. As to quaternary structure, the RNAP catalytic core consists of 2 alpha, 1 beta, 1 beta' and 1 omega subunit. When a sigma factor is associated with the core the holoenzyme is formed, which can initiate transcription. The cofactor is Mg(2+). Zn(2+) is required as a cofactor.

The enzyme catalyses RNA(n) + a ribonucleoside 5'-triphosphate = RNA(n+1) + diphosphate. Its function is as follows. DNA-dependent RNA polymerase catalyzes the transcription of DNA into RNA using the four ribonucleoside triphosphates as substrates. The protein is DNA-directed RNA polymerase subunit beta' of Burkholderia pseudomallei (strain 1106a).